Consider the following 113-residue polypeptide: UPF0482 protein YnfB (113 aa).

Positions 1-28 (MKITLSKRIGLLAFLLPCALALSTTVHA) are cleaved as a signal peptide.

This sequence belongs to the UPF0482 family.

In Escherichia coli O127:H6 (strain E2348/69 / EPEC), this protein is UPF0482 protein YnfB.